The chain runs to 884 residues: Alanine--tRNA ligase (884 aa).

Residues histidine 562, histidine 566, cysteine 674, and histidine 678 each contribute to the Zn(2+) site.

Belongs to the class-II aminoacyl-tRNA synthetase family. Zn(2+) is required as a cofactor.

The protein resides in the cytoplasm. It carries out the reaction tRNA(Ala) + L-alanine + ATP = L-alanyl-tRNA(Ala) + AMP + diphosphate. Its function is as follows. Catalyzes the attachment of alanine to tRNA(Ala) in a two-step reaction: alanine is first activated by ATP to form Ala-AMP and then transferred to the acceptor end of tRNA(Ala). Also edits incorrectly charged Ser-tRNA(Ala) and Gly-tRNA(Ala) via its editing domain. The chain is Alanine--tRNA ligase from Rhizobium johnstonii (strain DSM 114642 / LMG 32736 / 3841) (Rhizobium leguminosarum bv. viciae).